We begin with the raw amino-acid sequence, 234 residues long: Probable plastid-lipid-associated protein 5, chloroplastic (234 aa).

A chloroplast-targeting transit peptide spans 1-45 (MALPWCLKTGVLTSPAAGFNHPSDSGFAVPTKLLSIRKGDRERLR).

Belongs to the PAP/fibrillin family.

It is found in the plastid. Its subcellular location is the chloroplast thylakoid. This is Probable plastid-lipid-associated protein 5, chloroplastic (PAP5) from Arabidopsis thaliana (Mouse-ear cress).